The sequence spans 180 residues: Molybdopterin synthase catalytic subunit (180 aa).

Residues 123 to 124 (HR), Lys-139, and 146 to 148 (KLE) each bind substrate. Residues 161–180 (RDGQKGVKVEGGKEGVEAKH) are disordered.

The protein belongs to the MoaE family. MOCS2B subfamily. In terms of assembly, heterotetramer; composed of 2 small (MOCS2A) and 2 large (MOCS2B) subunits.

It localises to the cytoplasm. The enzyme catalyses 2 [molybdopterin-synthase sulfur-carrier protein]-C-terminal-Gly-aminoethanethioate + cyclic pyranopterin phosphate + H2O = molybdopterin + 2 [molybdopterin-synthase sulfur-carrier protein]-C-terminal Gly-Gly + 2 H(+). It participates in cofactor biosynthesis; molybdopterin biosynthesis. Its function is as follows. Catalytic subunit of the molybdopterin synthase complex, a complex that catalyzes the conversion of precursor Z into molybdopterin. Acts by mediating the incorporation of 2 sulfur atoms from thiocarboxylated MOCS2A into precursor Z to generate a dithiolene group. This Pyrenophora tritici-repentis (strain Pt-1C-BFP) (Wheat tan spot fungus) protein is Molybdopterin synthase catalytic subunit.